A 167-amino-acid chain; its full sequence is U-scoloptoxin(08)-Er5b (167 aa).

The N-terminal stretch at Met1–Gly22 is a signal peptide. The propeptide occupies Glu23–Arg94. 3 RLWRNWE repeats span residues Arg34–Glu40, Arg61–Glu67, and Arg86–Glu92. The residue at position 95 (Gln95) is a Pyrrolidone carboxylic acid. The stretch at Glu107–Glu113 is one RLWRNWE 4; approximate repeat. A propeptide spanning residues Trp112 to Arg118 is cleaved from the precursor. Residue Gln119 is modified to Pyrrolidone carboxylic acid. One copy of the RLWRNWE 5 repeat lies at Arg134–Glu140. Positions Trp139–Glu167 are excised as a propeptide. The tract at residues Arg147 to Glu167 is disordered.

The protein belongs to the scoloptoxin-08 family. In terms of tissue distribution, expressed by the venom gland.

It localises to the secreted. In Ethmostigmus rubripes (Giant centipede), this protein is U-scoloptoxin(08)-Er5b.